A 176-amino-acid polypeptide reads, in one-letter code: Retinol-binding protein 4-B (176 aa).

At Ser1 the chain carries N-acetylserine. 3 disulfides stabilise this stretch: Cys3–Cys159, Cys69–Cys173, and Cys119–Cys128. Position 97 (Gln97) interacts with substrate.

This sequence belongs to the calycin superfamily. Lipocalin family.

The protein localises to the secreted. In terms of biological role, RBP delivers retinol from the liver stores to the peripheral tissues. In plasma, the RBP-retinol complex interacts with transthyretin, this prevents its loss by filtration through the kidney glomeruli. The protein is Retinol-binding protein 4-B (rbp4b) of Oncorhynchus mykiss (Rainbow trout).